The chain runs to 192 residues: Putative cyclic ADP-D-ribose synthase ThsB1 (192 aa).

This sequence belongs to the Thoeris B TIR-like family. As to quaternary structure, monomer; not seen to interact with ThsA.

The protein resides in the cytoplasm. With respect to regulation, activated upon phage infection. TIR-like domain-containing component of the Thoeris antiviral defense system, composed of ThsA and ThsB. Expression of ThsA and ThsB in B.subtilis (strain BEST7003) confers resistance to phages SBSphiC, SBSphiJ and SPO1. Phage infection activates this protein so that 30 to 45 minutes post-infection with phage SPO1 it generates a signal molecule that in turn activates the NAD(+) hydrolase activity of ThsA. The signal is similar to cyclic ADP-D-ribose, but how it differs is unknown. In vitro purified (but unactivated) ThsB has no NAD(+) hydrolyzing activity, no activity on AMP, CMP, GMP or UMP, does not alter the activity of ThsA, does not bind DNA. Hydrolyzes NAD(+) to make a cyclic ADP-D-ribose (cADPR) signaling molecule; might make 3'cADPR. This chain is Putative cyclic ADP-D-ribose synthase ThsB1, found in Bacillus cereus (strain MSX-D12).